A 131-amino-acid chain; its full sequence is Olfactory receptor-like protein COR9 (131 aa).

Topologically, residues 1 to 16 (VAICSPLLYSTVMTKR) are cytoplasmic. The chain crosses the membrane as a helical span at residues 17-41 (VCMQLVVGSYMGGLLNSLTHTCGLL). Residues 42 to 82 (GLPFCGPNVINHYFCDIPPLLQLACSDTHRNETLLLAFSAV) are Extracellular-facing. The N-linked (GlcNAc...) asparagine glycan is linked to asparagine 72. The helical transmembrane segment at 83-103 (IALFTLFVITASYMLILSVIL) threads the bilayer. Over 104 to 116 (KIQSDDGRKKTFH) the chain is Cytoplasmic. Residues 117-131 (TCASHLTAITIFFGS) traverse the membrane as a helical segment.

It belongs to the G-protein coupled receptor 1 family.

The protein localises to the cell membrane. Functionally, odorant receptor. In Gallus gallus (Chicken), this protein is Olfactory receptor-like protein COR9 (COR9).